The following is a 318-amino-acid chain: 2-keto-3-deoxygluconate permease (318 aa).

10 helical membrane-spanning segments follow: residues 10 to 30 (IPGG…TFTP), 42 to 62 (GLIT…GASI), 76 to 96 (VLVV…GAFL), 105 to 125 (LLAG…NGGL), 139 to 159 (AGAF…VILG), 162 to 182 (GIAT…LIGF), 199 to 219 (VQTL…LSVI), 224 to 244 (FAGI…LILA), 254 to 274 (TAGI…LLIA), and 289 to 309 (ALVA…TALW).

Belongs to the KdgT transporter family.

The protein resides in the cell inner membrane. The enzyme catalyses 2-dehydro-3-deoxy-D-gluconate(in) + H(+)(in) = 2-dehydro-3-deoxy-D-gluconate(out) + H(+)(out). In terms of biological role, catalyzes the proton-dependent uptake of 2-keto-3-deoxygluconate (KDG) into the cell. This chain is 2-keto-3-deoxygluconate permease, found in Pectobacterium atrosepticum (strain SCRI 1043 / ATCC BAA-672) (Erwinia carotovora subsp. atroseptica).